Reading from the N-terminus, the 413-residue chain is Putative competence-damage inducible protein (413 aa).

It belongs to the CinA family.

The polypeptide is Putative competence-damage inducible protein (Pediococcus pentosaceus (strain ATCC 25745 / CCUG 21536 / LMG 10740 / 183-1w)).